Consider the following 135-residue polypeptide: Small ribosomal subunit protein uS8 (135 aa).

The protein belongs to the universal ribosomal protein uS8 family. In terms of assembly, part of the 30S ribosomal subunit. Contacts proteins S5 and S12.

Functionally, one of the primary rRNA binding proteins, it binds directly to 16S rRNA central domain where it helps coordinate assembly of the platform of the 30S subunit. In Cutibacterium acnes (strain DSM 16379 / KPA171202) (Propionibacterium acnes), this protein is Small ribosomal subunit protein uS8.